We begin with the raw amino-acid sequence, 87 residues long: Small ribosomal subunit protein uS15 (87 aa).

It belongs to the universal ribosomal protein uS15 family. As to quaternary structure, part of the 30S ribosomal subunit. Forms a bridge to the 50S subunit in the 70S ribosome, contacting the 23S rRNA.

One of the primary rRNA binding proteins, it binds directly to 16S rRNA where it helps nucleate assembly of the platform of the 30S subunit by binding and bridging several RNA helices of the 16S rRNA. Functionally, forms an intersubunit bridge (bridge B4) with the 23S rRNA of the 50S subunit in the ribosome. This is Small ribosomal subunit protein uS15 from Clostridium perfringens (strain ATCC 13124 / DSM 756 / JCM 1290 / NCIMB 6125 / NCTC 8237 / Type A).